Reading from the N-terminus, the 858-residue chain is Elongation factor 2 (858 aa).

The tr-type G domain maps to 17 to 362; it reads ANIRNMSVIA…MITIHLPSPV (346 aa). Residues 26 to 33, 158 to 161, and 216 to 218 contribute to the GTP site; these read AHVDHGKS, NKMD, and SGL. H715 bears the Diphthamide mark.

The protein belongs to the TRAFAC class translation factor GTPase superfamily. Classic translation factor GTPase family. EF-G/EF-2 subfamily. Binds to 80S ribosomes. Actively translating ribosomes show mutually exclusive binding of eIF5a (EIF5A or EIF5A2) and EEF2/eEF2. Interacts with serbp1; interaction sequesters eef2/eEF2 at the A-site of the ribosome, thereby blocking the interaction sites of the mRNA-tRNA complex, promoting ribosome stabilization and hibernation. Interacts with habp4; interaction takes place at the A-site of hibernating ribosomes and promotes ribosome stabilization.

It is found in the cytoplasm. The protein localises to the nucleus. It catalyses the reaction GTP + H2O = GDP + phosphate + H(+). Functionally, catalyzes the GTP-dependent ribosomal translocation step during translation elongation. During this step, the ribosome changes from the pre-translocational (PRE) to the post-translocational (POST) state as the newly formed A-site-bound peptidyl-tRNA and P-site-bound deacylated tRNA move to the P and E sites, respectively. Catalyzes the coordinated movement of the two tRNA molecules, the mRNA and conformational changes in the ribosome. This Xenopus laevis (African clawed frog) protein is Elongation factor 2.